The chain runs to 719 residues: Glutathionylspermidine synthase (719 aa).

One can recognise a Peptidase C51 domain in the interval 54–200; it reads CLPLSSFERK…TESGEVELLD (147 aa). Glutathione is bound at residue R350. Position 350-352 (350-352) interacts with ATP; it reads RFD. D352, E364, and N366 together coordinate Mg(2+). Position 369 (S369) interacts with glutathione. E432 lines the spermidine pocket. Glutathione contacts are provided by E433 and T501. ATP is bound by residues K544, K579, G586, Q653, and 689–691; that span reads KIT.

In the C-terminal section; belongs to the glutathionylspermidine synthase preATP-grasp family. It depends on Mg(2+) as a cofactor. In terms of processing, the N-terminus is blocked.

The enzyme catalyses spermidine + glutathione + ATP = glutathionylspermidine + ADP + phosphate + H(+). Functionally, conjugates glutathione (gamma-Glu-Cys-Gly) and spermidine to form glutathionylspermidine in the biosynthesis trypanothione (N(1),N(8)-bis(glutathionyl)spermidine), which is involved in maintaining intracellular thiol redox and in defense against oxidants. The polypeptide is Glutathionylspermidine synthase (GSP) (Crithidia fasciculata).